The following is a 201-amino-acid chain: Ras-related protein Rab-1B (201 aa).

Met1 is modified (N-acetylmethionine). GTP-binding residues include Ser17, Gly18, Val19, Gly20, Lys21, Ser22, Cys23, Tyr33, Thr34, Glu35, Ser36, Ser39, and Thr40. Ser22 provides a ligand contact to Mg(2+). The Switch 1 signature appears at 30-45; it reads DDTYTESYISTIGVDF. Residues Thr40 and Asp63 each contribute to the Mg(2+) site. Residues 64–83 are switch 2 region; required for interaction with REP1/CHM; the sequence is TAGQERFRTITSSYYRGAHG. The Switch 2 motif lies at 65–80; the sequence is AGQERFRTITSSYYRG. 7 residues coordinate GTP: Gly66, Asn121, Lys122, Asp124, Ser151, Ala152, and Lys153. A disordered region spans residues 174-201; the sequence is GPGAASGGERPNLKIDSTPVKPAGGGCC. Residues Cys200 and Cys201 are each lipidated (S-geranylgeranyl cysteine). A Cysteine methyl ester modification is found at Cys201.

It belongs to the small GTPase superfamily. Rab family. Interacts with MICAL1 and MICAL2. Interacts (in GTP-bound form) with MICALCL, MICAL1 and MILCAL3. Interacts with GDI1; the interaction requires the GDP-bound state. Interacts with CHM/REP1; the interaction requires the GDP-bound form and is necessary for prenylation by GGTase II. Interacts with RabGAP TBC1D20. Interacts (in GDP-bound form) with lipid phosphatase MTMR6 (via GRAM domain); the interaction regulates MTMR6 recruitment to the endoplasmic reticulum-Golgi intermediate compartment. Interacts (in GDP-bound form) with lipid phosphatase MTMR7. Requires Mg(2+) as cofactor. In terms of processing, prenylated; by GGTase II, only after interaction of the substrate with Rab escort protein 1 (REP1).

It is found in the cytoplasm. The protein localises to the membrane. Its subcellular location is the preautophagosomal structure membrane. The protein resides in the perinuclear region. The enzyme catalyses GTP + H2O = GDP + phosphate + H(+). With respect to regulation, regulated by guanine nucleotide exchange factors (GEFs) which promote the exchange of bound GDP for free GTP. Regulated by GTPase activating proteins (GAPs) including TBC1D20 which increases the GTP hydrolysis activity. Inhibited by GDP dissociation inhibitors (GDIs). The small GTPases Rab are key regulators of intracellular membrane trafficking, from the formation of transport vesicles to their fusion with membranes. Rabs cycle between an inactive GDP-bound form and an active GTP-bound form that is able to recruit to membranes different set of downstream effectors directly responsible for vesicle formation, movement, tethering and fusion. Plays a role in the initial events of the autophagic vacuole development which take place at specialized regions of the endoplasmic reticulum. Regulates vesicular transport between the endoplasmic reticulum and successive Golgi compartments. Required to modulate the compacted morphology of the Golgi. Promotes the recruitment of lipid phosphatase MTMR6 to the endoplasmic reticulum-Golgi intermediate compartment. The polypeptide is Ras-related protein Rab-1B (RAB1B) (Macaca fascicularis (Crab-eating macaque)).